The following is a 96-amino-acid chain: Small ribosomal subunit protein bS6 (96 aa).

The protein belongs to the bacterial ribosomal protein bS6 family.

Functionally, binds together with bS18 to 16S ribosomal RNA. In Salinispora arenicola (strain CNS-205), this protein is Small ribosomal subunit protein bS6.